We begin with the raw amino-acid sequence, 1511 residues long: Bifunctional glutamate/proline--tRNA ligase (1511 aa).

Residues 164–758 form a glutamate--tRNA ligase region; it reads GTKWDVSENK…SSVLYNRVAA (595 aa). The 'HIGH' region motif lies at 204–214; it reads PEASGYLHIGH. Positions 296–315 are disordered; the sequence is AEQMKAEREQRAESKHRQNS. Basic and acidic residues predominate over residues 299–315; that stretch reads MKAEREQRAESKHRQNS. K300 is modified (N6-acetyllysine; alternate). N6-malonyllysine; alternate is present on K300. T355 is subject to Phosphothreonine. K417 is subject to N6-acetyllysine. Positions 432 to 436 match the 'KMSKS' region motif; sequence VLSKR. S434 carries the phosphoserine modification. Residues K498, K535, K542, and K637 each carry the N6-acetyllysine modification. Over residues 708–728 the composition is skewed to basic and acidic residues; sequence KEMPTSGSKEKTKAEPLKKET. Positions 708 to 741 are disordered; it reads KEMPTSGSKEKTKAEPLKKETSSAPKEGPVPAVS. S746 is modified (phosphoserine). The WHEP-TRS 1 domain maps to 748–804; it reads ESSVLYNRVAAQGDVVRELKAKKAAKEDVDAAVKQLLALKAEYKQKTGQEYKPGNPP. Residues 759 to 955 are 3 X 57 AA approximate repeats; the sequence is QGDVVRELKA…GIEYKPVSAT (197 aa). N6-acetyllysine is present on K787. The disordered stretch occupies residues 794-823; sequence TGQEYKPGNPPSAAAQSASTKSLPSAGEDR. Positions 807–816 are enriched in polar residues; it reads AAQSASTKSL. The WHEP-TRS 2 domain occupies 821–877; it reads EDRSLYDKIAAQGEVVRKLKAEKAPKAKVTEAVECLLSLKAEYKEKTGKEYVPGQPP. Position 860 is an N6-acetyllysine (K860). Disordered stretches follow at residues 868 to 903 and 952 to 1015; these read GKEY…AKAL and VSAT…RLGL. At Y871 the chain carries Phosphotyrosine. A compositionally biased stretch (low complexity) spans 877–890; it reads PASQKSQPSPASKA. S885 is subject to Phosphoserine; by CDK5. The residue at position 897 (T897) is a Phosphothreonine. Residues 899–955 form the WHEP-TRS 3 domain; sequence EAKALFDRVACQGEVVRKLKAEKASKDQVDPAVQELLQLKAQYKSLTGIEYKPVSAT. Positions 957–975 are enriched in basic and acidic residues; the sequence is SEDKDKKKKEKENKSEKQN. The segment covering 992-1005 has biased composition (gly residues); that stretch reads QGGGLSSSGAGEGQ. S997 carries the phosphoserine modification. At S998 the chain carries Phosphoserine; by RPS6KB1. S999 bears the Phosphoserine mark. A proline--tRNA ligase region spans residues 1006–1511; it reads GPKKQTRLGL…KFYTLFGRSY (506 aa). L-proline-binding positions include 1120–1122 and R1151; that span reads TSE. Residues R1151, E1153, R1162, T1163, Q1236, and T1239 each contribute to the ATP site. R1151 is subject to Omega-N-methylarginine. Residue Q1236 coordinates Mg(2+). H1241 provides a ligand contact to L-proline. Residues T1275 and R1277 each coordinate ATP. Phosphoserine is present on S1349. The Zn(2+) site is built by C1447, C1452, C1494, and C1496. The residue at position 1502 (K1502) is an N6-acetyllysine.

In the N-terminal section; belongs to the class-I aminoacyl-tRNA synthetase family. Glutamate--tRNA ligase type 2 subfamily. It in the C-terminal section; belongs to the class-II aminoacyl-tRNA synthetase family. As to quaternary structure, homodimer. Part of the aminoacyl-tRNA synthetase multienzyme complex, also know as multisynthetase complex, that is composed of the tRNA ligases for Arg (RARS1), Asp (DARS1), Gln (QARS1), Ile (IARS1), Leu (LARS1), Lys (KARS1), Met (MARS1) the bifunctional ligase for Glu and Pro (EPRS1) and the auxiliary subunits AIMP1/p43, AIMP2/p38 and EEF1E1/p18. Forms a linear complex that contains MARS1, EEF1E1, EPRS1 and AIMP2 that is at the core of the multisubunit complex. Interacts with TARS3. Interacts with DUS2L. Component of the GAIT complex which is composed of EPRS1, RPL13A and GAPDH. Interacts (phosphorylated at Ser-998) with SLC27A1; mediates the translocation of SLC27A1 from the cytoplasm to the plasma membrane thereby increasing the uptake of long-chain fatty acids. Post-translationally, phosphorylated at Ser-998 by RPS6KB1; triggers EPRS1 release from the aminoacyl-tRNA synthetase multienzyme complex. In monocytes, the IFN-gamma-induced phosphorylation at Ser-998 releases EPRS1 from the aminoacyl-tRNA synthetase multienzyme complex, allowing its association with the GAIT complex. Phosphorylation at Ser-998 is specifically required for the RPL13A-mediated interaction of the GAIT complex with eIF4G. Phosphorylation at Ser-998 by RPS6KB1, is also induced by insulin through activation of the mTORC1 signaling pathway and promotes the interaction of EPRS1 with SLC27A1.

Its subcellular location is the cytoplasm. The protein resides in the cytosol. It is found in the membrane. The enzyme catalyses tRNA(Glu) + L-glutamate + ATP = L-glutamyl-tRNA(Glu) + AMP + diphosphate. The catalysed reaction is tRNA(Pro) + L-proline + ATP = L-prolyl-tRNA(Pro) + AMP + diphosphate. Its function is as follows. Multifunctional protein which primarily functions within the aminoacyl-tRNA synthetase multienzyme complex, also known as multisynthetase complex. Within the complex it catalyzes the attachment of both L-glutamate and L-proline to their cognate tRNAs in a two-step reaction where the amino acid is first activated by ATP to form a covalent intermediate with AMP. Subsequently, the activated amino acid is transferred to the acceptor end of the cognate tRNA to form L-glutamyl-tRNA(Glu) and L-prolyl-tRNA(Pro). Upon interferon-gamma stimulation, EPRS1 undergoes phosphorylation, causing its dissociation from the aminoacyl-tRNA synthetase multienzyme complex. It is recruited to form the GAIT complex, which binds to stem loop-containing GAIT elements found in the 3'-UTR of various inflammatory mRNAs, such as ceruloplasmin. The GAIT complex inhibits the translation of these mRNAs, allowing interferon-gamma to redirect the function of EPRS1 from protein synthesis to translation inhibition in specific cell contexts. Furthermore, it can function as a downstream effector in the mTORC1 signaling pathway, by promoting the translocation of SLC27A1 from the cytoplasm to the plasma membrane where it mediates the uptake of long-chain fatty acid by adipocytes. Thereby, EPRS1 also plays a role in fat metabolism and more indirectly influences lifespan. In Cricetulus griseus (Chinese hamster), this protein is Bifunctional glutamate/proline--tRNA ligase.